A 303-amino-acid chain; its full sequence is Glycosyltransferase AglJ (303 aa).

The next 2 membrane-spanning stretches (helical) occupy residues 230–250 (FYFGSVGFASTATGLGLALYV) and 263–283 (VIAVVSMAGILFGVQLLMFGV).

This sequence belongs to the glycosyltransferase 2 family.

It is found in the cell membrane. It functions in the pathway cell surface structure biogenesis; S-layer biogenesis. Involved in the assembly of a N-linked pentasaccharide that decorates the S-layer glycoprotein and flagellins. Adds the first hexose subunit of the pentasaccharide to the dolichol phosphate carrier. The chain is Glycosyltransferase AglJ (aglJ) from Haloferax volcanii (strain ATCC 29605 / DSM 3757 / JCM 8879 / NBRC 14742 / NCIMB 2012 / VKM B-1768 / DS2) (Halobacterium volcanii).